A 461-amino-acid chain; its full sequence is Porin AaxA (461 aa).

Residues 1–22 (MSFRSVLLTALLSLSFTTTMQA) form the signal peptide.

The protein belongs to the OprB family.

The protein localises to the cell outer membrane. Its function is as follows. Facilitates L-arginine uptake, as part of the AaxABC system. The arginine uptake by the bacterium in the macrophage may be a virulence factor against the host innate immune response. This is Porin AaxA (aaxA) from Chlamydia trachomatis serovar A (strain ATCC VR-571B / DSM 19440 / HAR-13).